We begin with the raw amino-acid sequence, 144 residues long: uncharacterized protein (144 aa).

N-linked (GlcNAc...) asparagine glycans are attached at residues Asn-14 and Asn-15. A helical transmembrane segment spans residues 90–110; sequence FSWFIFGLFIACLLLCITLVL. Residues 120–144 are disordered; that stretch reads NKATEVVPSSNIDDEEKQLSLSDMI.

Its subcellular location is the membrane. This is an uncharacterized protein from Saccharomyces cerevisiae (strain ATCC 204508 / S288c) (Baker's yeast).